The chain runs to 192 residues: UPF0312 protein plu2095 (192 aa).

Positions 1-23 (MLKKTLLGLTAGALLLNASSALA) are cleaved as a signal peptide.

The protein belongs to the UPF0312 family. Type 1 subfamily.

Its subcellular location is the periplasm. The protein is UPF0312 protein plu2095 of Photorhabdus laumondii subsp. laumondii (strain DSM 15139 / CIP 105565 / TT01) (Photorhabdus luminescens subsp. laumondii).